A 60-amino-acid chain; its full sequence is Metallothionein (60 aa).

The beta stretch occupies residues 1-28 (MDPCDCSKTGKCNCGGSCTCTNCSCTSC). Residues cysteine 4, cysteine 6, cysteine 12, cysteine 14, cysteine 18, cysteine 20, cysteine 23, cysteine 25, cysteine 28, cysteine 32, cysteine 33, cysteine 35, cysteine 36, cysteine 40, cysteine 43, cysteine 47, cysteine 49, cysteine 54, cysteine 58, and cysteine 59 each contribute to the a divalent metal cation site. The segment at 29–60 (KKSCCACCPSGCTKCASGCVCKGKTCDTTCCQ) is alpha.

This sequence belongs to the metallothionein superfamily. Type 1 family.

Its function is as follows. Metallothioneins have a high content of cysteine residues that bind various heavy metals. This Oryzias latipes (Japanese rice fish) protein is Metallothionein (mt).